The sequence spans 203 residues: Probable host range protein 2-3 (203 aa).

Residues 182 to 203 are disordered; the sequence is LEEEDEEKIADTGNDNQKDAED.

This sequence belongs to the poxviridae C7 protein family.

Its function is as follows. Plays a role for multiplication of the virus in different cell types. This Myxoma virus (strain Lausanne) (MYXV) protein is Probable host range protein 2-3.